The sequence spans 156 residues: Cyclin-dependent protein kinase inhibitor SMR10 (156 aa).

The segment at 52-90 (QDQDLEPKSQETNNCSRKEGATVKKEEEEEDDYCKTPTR) is disordered. Residues 67 to 77 (SRKEGATVKKE) show a composition bias toward basic and acidic residues.

Functionally, probable cyclin-dependent protein kinase (CDK) inhibitor that functions as a repressor of mitosis in the endoreduplication cell cycle. The chain is Cyclin-dependent protein kinase inhibitor SMR10 from Arabidopsis thaliana (Mouse-ear cress).